We begin with the raw amino-acid sequence, 586 residues long: MTVEEVGDDYTKDGTVDLRGNRVRRSQTGRWKACSFVVVYEVFERMAYYGISSNLVIYMTTKLHQGTVKSSNNVTNWVGTSWLTPILGAYVADAHFGRYITFVISSAIYLLGMALLTLSVSLPGLKPPKCSTANVENCEKASVIQLAVFFGALYTLAIGTGGTKPNISTIGADQFDEFDPKDKIHKHSFFNWWMFSIFFGTFFATTVLVYVQDNVGWAIGYGLSTLGLAFSIFIFLLGTRLYRHKLPMGSPFTKMARVIVASLRKAREPMSSDSTRFYELPPMEYASKRAFPIHSTSSLRFLNRASLKTGSTHKWRLCTITEVEETKQMLKMLPVLFVTFVPSMMLAQIMTLFIKQGTTLDRRLTNNFSIPPASLLGFTTFSMLVSIVIYDRVFVKFMRKLTGNPRGITLLQRMGIGMILHILIMIIASITERYRLKVAAEHGLTHQTAVPIPLSIFTLLPQYVLMGLADAFIEIAKLEFFYDQAPESMKSLGTSYTSTSMAVGYFMSSILLSSVSQITKKQGRGWIQNNLNESRLDNYYMFFAVLNLLNFILFLVVIRFYEYRADVTQSANVEQKEPNMVDNYNE.

11 helical membrane-spanning segments follow: residues Trp77–Gly97, Ile100–Val120, Ala141–Gly161, Phe189–Val209, Trp217–Leu237, Pro334–Ile354, Ile370–Tyr390, Ile408–Ala428, Ala449–Ala469, Leu492–Leu512, and Asn538–Ile558.

Belongs to the major facilitator superfamily. Proton-dependent oligopeptide transporter (POT/PTR) (TC 2.A.17) family. Expressed in roots and siliques.

Its subcellular location is the membrane. In terms of biological role, peptide transporter. The sequence is that of Protein NRT1/ PTR FAMILY 5.3 (NPF5.3) from Arabidopsis thaliana (Mouse-ear cress).